The chain runs to 117 residues: Large ribosomal subunit protein uL18 (117 aa).

The protein belongs to the universal ribosomal protein uL18 family. Part of the 50S ribosomal subunit; part of the 5S rRNA/L5/L18/L25 subcomplex. Contacts the 5S and 23S rRNAs.

Functionally, this is one of the proteins that bind and probably mediate the attachment of the 5S RNA into the large ribosomal subunit, where it forms part of the central protuberance. This is Large ribosomal subunit protein uL18 from Edwardsiella ictaluri (strain 93-146).